A 144-amino-acid chain; its full sequence is 3-hydroxyacyl-[acyl-carrier-protein] dehydratase FabZ (144 aa).

His-51 is a catalytic residue.

It belongs to the thioester dehydratase family. FabZ subfamily.

Its subcellular location is the cytoplasm. It carries out the reaction a (3R)-hydroxyacyl-[ACP] = a (2E)-enoyl-[ACP] + H2O. Functionally, involved in unsaturated fatty acids biosynthesis. Catalyzes the dehydration of short chain beta-hydroxyacyl-ACPs and long chain saturated and unsaturated beta-hydroxyacyl-ACPs. This Enterococcus faecalis (strain ATCC 700802 / V583) protein is 3-hydroxyacyl-[acyl-carrier-protein] dehydratase FabZ (fabZ1).